The primary structure comprises 431 residues: Enolase (431 aa).

Residue Gln167 coordinates (2R)-2-phosphoglycerate. Glu209 functions as the Proton donor in the catalytic mechanism. Residues Asp246, Glu289, and Asp316 each contribute to the Mg(2+) site. 4 residues coordinate (2R)-2-phosphoglycerate: Lys341, Arg370, Ser371, and Lys392. Lys341 (proton acceptor) is an active-site residue.

This sequence belongs to the enolase family. As to quaternary structure, component of the RNA degradosome, a multiprotein complex involved in RNA processing and mRNA degradation. Requires Mg(2+) as cofactor.

Its subcellular location is the cytoplasm. It is found in the secreted. The protein localises to the cell surface. The enzyme catalyses (2R)-2-phosphoglycerate = phosphoenolpyruvate + H2O. The protein operates within carbohydrate degradation; glycolysis; pyruvate from D-glyceraldehyde 3-phosphate: step 4/5. Functionally, catalyzes the reversible conversion of 2-phosphoglycerate (2-PG) into phosphoenolpyruvate (PEP). It is essential for the degradation of carbohydrates via glycolysis. In Shewanella baltica (strain OS155 / ATCC BAA-1091), this protein is Enolase.